The following is a 496-amino-acid chain: MNQYILAIDQGTTSSRAILFNQKGEIVHMAQKEFTQYFPQPGWVEHNANEIWGSVLAVIASVLSEAQVKPEQVAAIGITNQRETTVVWEKDTGNPIYNAIVWQSRQTAGICDELKAKGYDPLFREKTGLLIDAYFSGTKVKWILDHVEGARERAERGELLFGTIDTWLIWKLSGGRAHVTDYSNASRTLMFNIHTLEWDDELLDILGVPKAMLPEVRPSSEVYAKTAPYHFFGVEVPIAGAAGDQQAALFGQACFTEGMAKNTYGTGCFMLMNTGEKAVASKHGLLTTIAWGIDGKVEYALEGSIFVAGSAIQWLRDGLRMIKTAADSEAYAEKVESTDGVYVVPAFVGLGTPYWDSEVRGAVFGLTRGTTKEHFIRATLESLAYQTKDVLAAMEADSGISLTTLRVDGGAVKNNFLMQFQSDLLAVPVERPVVNETTALGAAYLAGLAVGYWNSRDDIAAQWQLERRFEPKMDDDKRTMLYDGWKKAVRAAMAFK.

Position 12 (Thr12) interacts with ADP. Residues Thr12, Thr13, and Ser14 each contribute to the ATP site. A sn-glycerol 3-phosphate-binding site is contributed by Thr12. ADP is bound at residue Arg16. Positions 82, 83, and 134 each coordinate sn-glycerol 3-phosphate. Arg82, Glu83, and Tyr134 together coordinate glycerol. The residue at position 230 (His230) is a Phosphohistidine; by HPr. Asp244 contributes to the sn-glycerol 3-phosphate binding site. Residues Asp244 and Gln245 each coordinate glycerol. Residues Thr266 and Gly309 each contribute to the ADP site. The ATP site is built by Thr266, Gly309, Gln313, and Gly410. Residues Gly410 and Asn414 each coordinate ADP.

It belongs to the FGGY kinase family. Homotetramer and homodimer (in equilibrium). The phosphoenolpyruvate-dependent sugar phosphotransferase system (PTS), including enzyme I, and histidine-containing protein (HPr) are required for the phosphorylation, which leads to the activation of the enzyme.

It carries out the reaction glycerol + ATP = sn-glycerol 3-phosphate + ADP + H(+). It functions in the pathway polyol metabolism; glycerol degradation via glycerol kinase pathway; sn-glycerol 3-phosphate from glycerol: step 1/1. With respect to regulation, activated by phosphorylation and inhibited by fructose 1,6-bisphosphate (FBP). Its function is as follows. Key enzyme in the regulation of glycerol uptake and metabolism. Catalyzes the phosphorylation of glycerol to yield sn-glycerol 3-phosphate. In Geobacillus kaustophilus (strain HTA426), this protein is Glycerol kinase.